The primary structure comprises 338 residues: Elongation factor Ts, mitochondrial (338 aa).

Residues 1-55 constitute a mitochondrion transit peptide; that stretch reads MSLLRSLRLCLVARTGSCPLSALGPGPLLPSLQAGLPLLQSPQQWHTFHSGSWLS. Lys89, Lys146, and Lys205 each carry N6-succinyllysine. Position 283 is a phosphoserine (Ser283).

The protein belongs to the EF-Ts family.

The protein resides in the mitochondrion. Its function is as follows. Associates with the EF-Tu.GDP complex and induces the exchange of GDP to GTP. It remains bound to the aminoacyl-tRNA.EF-Tu.GTP complex up to the GTP hydrolysis stage on the ribosome. This chain is Elongation factor Ts, mitochondrial, found in Bos taurus (Bovine).